The sequence spans 315 residues: 3-chlorobenzoate-3,4-dioxygenase reductase subunit (315 aa).

1 to 103 serves as a coordination point for FMN; the sequence is MVAIDQHDTY…GATTRISAPR (103 aa). One can recognise an FAD-binding FR-type domain in the interval 7-109; sequence HDTYSVRVIS…SAPRNAFALD (103 aa). Positions 228–315 constitute a 2Fe-2S ferredoxin-type domain; it reads NEFTVNLARS…ALSPELTLDL (88 aa). Residues cysteine 264, cysteine 269, cysteine 272, and cysteine 302 each coordinate [2Fe-2S] cluster.

It belongs to the PDR/VanB family. This dioxygenase system consists of two proteins: phthalate oxygenase and phthalate oxygenase reductase. Requires FMN as cofactor.

The polypeptide is 3-chlorobenzoate-3,4-dioxygenase reductase subunit (cbaB) (Comamonas testosteroni (Pseudomonas testosteroni)).